A 223-amino-acid polypeptide reads, in one-letter code: Ribonuclease 3 (223 aa).

Positions 4–127 (YSQLEKRLNY…IIGAVYLEAG (124 aa)) constitute an RNase III domain. A Mg(2+)-binding site is contributed by glutamate 40. Residue aspartate 44 is part of the active site. The Mg(2+) site is built by asparagine 113 and glutamate 116. The active site involves glutamate 116. Positions 154-223 (DYKTALQELT…AKIALEALKK (70 aa)) constitute a DRBM domain.

This sequence belongs to the ribonuclease III family. Homodimer. It depends on Mg(2+) as a cofactor.

The protein resides in the cytoplasm. The enzyme catalyses Endonucleolytic cleavage to 5'-phosphomonoester.. Digests double-stranded RNA. Involved in the processing of primary rRNA transcript to yield the immediate precursors to the large and small rRNAs (23S and 16S). Processes some mRNAs, and tRNAs when they are encoded in the rRNA operon. Processes pre-crRNA and tracrRNA of type II CRISPR loci if present in the organism. This chain is Ribonuclease 3, found in Sulfurovum sp. (strain NBC37-1).